We begin with the raw amino-acid sequence, 410 residues long: Arginine deiminase (410 aa).

The active-site Amidino-cysteine intermediate is the C400.

Belongs to the arginine deiminase family.

It is found in the cytoplasm. The catalysed reaction is L-arginine + H2O = L-citrulline + NH4(+). It participates in amino-acid degradation; L-arginine degradation via ADI pathway; carbamoyl phosphate from L-arginine: step 1/2. This chain is Arginine deiminase, found in Bacillus cereus (strain ATCC 10987 / NRS 248).